Consider the following 1548-residue polypeptide: Multidrug resistance protein (1548 aa).

Over 1-238 (MVDNGHVTIA…YHVWAQILPK (238 aa)) the chain is Cytoplasmic. Positions 231 to 514 (VWAQILPKLL…IPIIISSILQ (284 aa)) constitute an ABC transmembrane type-1 1 domain. The helical transmembrane segment at 239–256 (LLSDVTALMLPVLLEYFV) threads the bilayer. N-linked (GlcNAc...) asparagine glycosylation is present at Asn-263. 5 helical membrane-spanning segments follow: residues 266-287 (WGWG…SCSA), 349-367 (VMYF…LLLI), 375-392 (VPGM…AVIS), 463-480 (ATPT…HVSG), and 500-519 (VSFF…FVSA). At 520–932 (KRVTAFIECP…PWSTYVAYLK (413 aa)) the chain is on the cytoplasmic side. Residues 634 to 855 (VEEGDREYYQ…ALEETLRGEL (222 aa)) enclose the ABC transporter 1 domain. Position 667–674 (667–674 (GSTGSGKS)) interacts with ATP. Transmembrane regions (helical) follow at residues 933–950 (SCGG…FALT), 975–993 (TYLY…GSPL), 1051–1070 (GYLY…IIMV), and 1072–1088 (VQPF…YSYY). Positions 940 to 1221 (WGCLLATFAL…LVRQVAMVEA (282 aa)) constitute an ABC transmembrane type-1 2 domain. N-linked (GlcNAc...) asparagine glycosylation is found at Asn-1095 and Asn-1154. The next 2 helical transmembrane spans lie at 1164 to 1182 (LEFL…GVIG) and 1186 to 1205 (GASS…SMTL). The Cytoplasmic segment spans residues 1206–1548 (TETLNWLVRQ…RIVQPAVLSD (343 aa)). Residues 1286 to 1521 (LVLEGVQMRY…HQSMFHSMVE (236 aa)) form the ABC transporter 2 domain. 1320 to 1327 (GRTGSGKS) lines the ATP pocket.

Belongs to the ABC transporter superfamily. ABCB family. Multidrug resistance exporter (TC 3.A.1.201) subfamily.

It is found in the membrane. It carries out the reaction ATP + H2O + xenobioticSide 1 = ADP + phosphate + xenobioticSide 2.. The polypeptide is Multidrug resistance protein (PGPA) (Leishmania tarentolae (Sauroleishmania tarentolae)).